The sequence spans 272 residues: Orotidine 5'-phosphate decarboxylase (272 aa).

K93 (proton donor) is an active-site residue.

Belongs to the OMP decarboxylase family. Type 2 subfamily.

It catalyses the reaction orotidine 5'-phosphate + H(+) = UMP + CO2. It functions in the pathway pyrimidine metabolism; UMP biosynthesis via de novo pathway; UMP from orotate: step 2/2. This Roseiflexus castenholzii (strain DSM 13941 / HLO8) protein is Orotidine 5'-phosphate decarboxylase.